A 171-amino-acid chain; its full sequence is Phosphopantetheine adenylyltransferase (171 aa).

Threonine 9 provides a ligand contact to substrate. ATP is bound by residues threonine 9–phenylalanine 10 and histidine 17. Residues lysine 41, leucine 78, and arginine 92 each contribute to the substrate site. ATP-binding positions include glycine 93 to arginine 95, glutamate 103, and histidine 128 to lysine 134.

It belongs to the bacterial CoaD family. Homohexamer. Mg(2+) serves as cofactor.

It localises to the cytoplasm. It carries out the reaction (R)-4'-phosphopantetheine + ATP + H(+) = 3'-dephospho-CoA + diphosphate. Its pathway is cofactor biosynthesis; coenzyme A biosynthesis; CoA from (R)-pantothenate: step 4/5. In terms of biological role, reversibly transfers an adenylyl group from ATP to 4'-phosphopantetheine, yielding dephospho-CoA (dPCoA) and pyrophosphate. The sequence is that of Phosphopantetheine adenylyltransferase from Dinoroseobacter shibae (strain DSM 16493 / NCIMB 14021 / DFL 12).